Consider the following 223-residue polypeptide: Probable Ras-related protein Rab-4A (223 aa).

16–23 lines the GTP pocket; it reads GNAGTGKT. The Effector region motif lies at 38–46; sequence TQHTIGAEF. GTP-binding positions include 64–68 and 122–125; these read DTAGQ and NKKD. 2 S-geranylgeranyl cysteine lipidation sites follow: Cys-221 and Cys-223. A Cysteine methyl ester modification is found at Cys-223.

It belongs to the small GTPase superfamily. Rab family.

It is found in the cell membrane. In terms of biological role, protein transport. Probably involved in vesicular traffic. This chain is Probable Ras-related protein Rab-4A, found in Echinococcus multilocularis (Fox tapeworm).